Here is a 180-residue protein sequence, read N- to C-terminus: Large ribosomal subunit protein uL18m (180 aa).

This sequence belongs to the universal ribosomal protein uL18 family. Component of the mitochondrial ribosome large subunit (39S) which comprises a 16S rRNA and about 50 distinct proteins.

The protein resides in the mitochondrion. Functionally, together with thiosulfate sulfurtransferase (TST), acts as a mitochondrial import factor for the cytosolic 5S rRNA. The precursor form shows RNA chaperone activity; is able to fold the 5S rRNA into an import-competent conformation that is recognized by rhodanese (TST). Both the cytoplasmic and mitochondrial forms are able to bind to the helix IV-loop D in the gamma domain of the 5S rRNA. This is Large ribosomal subunit protein uL18m (MRPL18) from Bos taurus (Bovine).